Consider the following 397-residue polypeptide: Acetate kinase (397 aa).

Residue Asn-8 coordinates Mg(2+). Lys-15 serves as a coordination point for ATP. A substrate-binding site is contributed by Arg-89. The active-site Proton donor/acceptor is Asp-146. Residues 206–210 (HLGNG), 281–283 (DLR), and 329–333 (GIGEN) each bind ATP. Position 382 (Glu-382) interacts with Mg(2+).

It belongs to the acetokinase family. As to quaternary structure, homodimer. Mg(2+) serves as cofactor. The cofactor is Mn(2+).

It is found in the cytoplasm. It catalyses the reaction acetate + ATP = acetyl phosphate + ADP. The protein operates within metabolic intermediate biosynthesis; acetyl-CoA biosynthesis; acetyl-CoA from acetate: step 1/2. Functionally, catalyzes the formation of acetyl phosphate from acetate and ATP. Can also catalyze the reverse reaction. This chain is Acetate kinase, found in Geobacillus sp. (strain WCH70).